Here is a 167-residue protein sequence, read N- to C-terminus: Phosphopantetheine adenylyltransferase (167 aa).

S9 contacts substrate. ATP-binding positions include 9–10 and H17; that span reads SF. Substrate-binding residues include K41, L73, and K87. ATP is bound by residues 88-90, E98, and 123-129; these read GLR and YSYLSSS.

This sequence belongs to the bacterial CoaD family. Homohexamer. Mg(2+) is required as a cofactor.

Its subcellular location is the cytoplasm. The catalysed reaction is (R)-4'-phosphopantetheine + ATP + H(+) = 3'-dephospho-CoA + diphosphate. Its pathway is cofactor biosynthesis; coenzyme A biosynthesis; CoA from (R)-pantothenate: step 4/5. Its function is as follows. Reversibly transfers an adenylyl group from ATP to 4'-phosphopantetheine, yielding dephospho-CoA (dPCoA) and pyrophosphate. In Caldicellulosiruptor bescii (strain ATCC BAA-1888 / DSM 6725 / KCTC 15123 / Z-1320) (Anaerocellum thermophilum), this protein is Phosphopantetheine adenylyltransferase.